We begin with the raw amino-acid sequence, 229 residues long: Ras-related protein RABA6b (229 aa).

20–27 (GDSAVGKS) provides a ligand contact to GTP. The Effector region signature appears at 42–50 (SKPTIGVDF). GTP contacts are provided by residues 68-72 (DTAGQ), 126-129 (NKSD), and 156-157 (SA). S-geranylgeranyl cysteine attachment occurs at residues Cys226 and Cys227.

Belongs to the small GTPase superfamily. Rab family.

The protein resides in the cell membrane. Functionally, intracellular vesicle trafficking and protein transport. The sequence is that of Ras-related protein RABA6b (RABA6B) from Arabidopsis thaliana (Mouse-ear cress).